Reading from the N-terminus, the 456-residue chain is Zinc finger C2HC domain-containing protein 1C (456 aa).

Disordered regions lie at residues 16–46 and 85–113; these read MLPH…QSLK and YPHC…SSGP. 2 stretches are compositionally biased toward polar residues: residues 35–46 and 90–102; these read YEQGDSSQQSLK and GISQ…DSQG. Residues 211 to 265 are a coiled coil; that stretch reads VQIRRLEAAGESLEEEIRRKQILLRGKLKKTEEELRRIQTQKEQAKENENGELQK. Residues 336-388 are disordered; that stretch reads NKIRDPVSEPSVEKFSPPSETPVGALQGSARNSSLSMAPDSSGSSGSIEEPQL. The segment covering 368 to 382 has biased composition (low complexity); the sequence is SSLSMAPDSSGSSGS. The C2HC/C3H-type zinc-finger motif lies at 387-416; sequence QLGECSHCGRKFLSFRLERHSNICSRMRGS. Zn(2+) is bound by residues Cys-391, Cys-394, His-406, and Cys-410.

It belongs to the ZC2HC1 family. Requires Zn(2+) as cofactor.

This chain is Zinc finger C2HC domain-containing protein 1C (ZC2HC1C), found in Homo sapiens (Human).